Reading from the N-terminus, the 187-residue chain is MFRPASRALLRAPAVARGPASRRLISTAPAESKPRSWKNTAVRLGLAAGAIYYYNTSNVFAENPSFSLNNQLKKNSAEEPLPTLDSIKPRIREERESAAPKPNAEQAPAQELPFGEGAVKSPQELEEEAGQEAAFNPETGEINWDCPCLGGMAHGPCGEEFKAAFSCFVYSEEEPKGMDCIEKFKCV.

A mitochondrion-targeting transit peptide spans 1-24 (MFRPASRALLRAPAVARGPASRRL). Residues 25 to 43 (ISTAPAESKPRSWKNTAVR) lie on the Mitochondrial matrix side of the membrane. The chain crosses the membrane as a helical; Signal-anchor for type II membrane protein span at residues 44–61 (LGLAAGAIYYYNTSNVFA). Over 62–187 (ENPSFSLNNQ…MDCIEKFKCV (126 aa)) the chain is Mitochondrial intermembrane. The disordered stretch occupies residues 73–115 (KKNSAEEPLPTLDSIKPRIREERESAAPKPNAEQAPAQELPFG). Positions 87–98 (IKPRIREERESA) are enriched in basic and acidic residues. Disulfide bonds link Cys-146–Cys-148 and Cys-167–Cys-180. The CHCH domain maps to 154-187 (HGPCGEEFKAAFSCFVYSEEEPKGMDCIEKFKCV). The Cx9C motif signature appears at 157-167 (CGEEFKAAFSC).

In terms of assembly, monomer. The cofactor is Cu(2+). Zn(2+) serves as cofactor.

The protein localises to the mitochondrion inner membrane. Required for the import and folding of small cysteine-containing proteins (small Tim) in the mitochondrial intermembrane space (IMS). Forms a redox cycle with ERV1 that involves a disulfide relay system. Precursor proteins to be imported into the IMS are translocated in their reduced form into the mitochondria. The oxidized form of MIA40 forms a transient intermolecular disulfide bridge with the reduced precursor protein, resulting in oxidation of the precursor protein that now contains an intramolecular disulfide bond and is able to undergo folding in the IMS. The sequence is that of Mitochondrial intermembrane space import and assembly protein 40 (mia40) from Aspergillus oryzae (strain ATCC 42149 / RIB 40) (Yellow koji mold).